Consider the following 147-residue polypeptide: Ribosome-binding factor A (147 aa).

Residues Leu-123 to Asp-147 are disordered.

The protein belongs to the RbfA family. In terms of assembly, monomer. Binds 30S ribosomal subunits, but not 50S ribosomal subunits or 70S ribosomes.

It localises to the cytoplasm. In terms of biological role, one of several proteins that assist in the late maturation steps of the functional core of the 30S ribosomal subunit. Associates with free 30S ribosomal subunits (but not with 30S subunits that are part of 70S ribosomes or polysomes). Required for efficient processing of 16S rRNA. May interact with the 5'-terminal helix region of 16S rRNA. This Corynebacterium aurimucosum (strain ATCC 700975 / DSM 44827 / CIP 107346 / CN-1) (Corynebacterium nigricans) protein is Ribosome-binding factor A.